Consider the following 157-residue polypeptide: Endoribonuclease YbeY (157 aa).

Zn(2+)-binding residues include H111, H115, and H121.

This sequence belongs to the endoribonuclease YbeY family. Zn(2+) serves as cofactor.

It is found in the cytoplasm. Its function is as follows. Single strand-specific metallo-endoribonuclease involved in late-stage 70S ribosome quality control and in maturation of the 3' terminus of the 16S rRNA. The polypeptide is Endoribonuclease YbeY (Pseudomonas entomophila (strain L48)).